We begin with the raw amino-acid sequence, 38 residues long: Large ribosomal subunit protein bL36 (38 aa).

Belongs to the bacterial ribosomal protein bL36 family.

The protein is Large ribosomal subunit protein bL36 of Methylacidiphilum infernorum (isolate V4) (Methylokorus infernorum (strain V4)).